An 80-amino-acid polypeptide reads, in one-letter code: Ataxin-8 (80 aa).

Specifically found in brains from SCA8 patients (at protein level).

The protein localises to the nucleus. In Homo sapiens (Human), this protein is Ataxin-8 (ATXN8).